The following is a 475-amino-acid chain: Bifunctional purple acid phosphatase 26 (475 aa).

An N-terminal signal peptide occupies residues 1 to 30 (MNHLVIISVFLSSVLLLYRGESGITSSFIR). A glycan (N-linked (GlcNAc...) asparagine) is linked at N103. The Fe cation site is built by D162, D189, and Y192. Residue D189 coordinates Zn(2+). Zn(2+)-binding residues include N227 and H312. Substrate is bound at residue N227. H322 functions as the Proton donor in the catalytic mechanism. Position 349 (H349) interacts with Zn(2+). 349–351 (HVH) contacts substrate. H351 provides a ligand contact to Fe cation. 2 N-linked (GlcNAc...) asparagine glycosylation sites follow: N365 and N422.

It belongs to the metallophosphoesterase superfamily. Purple acid phosphatase family. In terms of assembly, homodimer. Fe cation serves as cofactor. Zn(2+) is required as a cofactor. Post-translationally, glycosylated. Expressed in roots, stems, leaves, flowers and siliques.

Its subcellular location is the vacuole. The catalysed reaction is a phosphate monoester + H2O = an alcohol + phosphate. It carries out the reaction 2 a phenolic donor + H2O2 = 2 a phenolic radical donor + 2 H2O. With respect to regulation, activated by Mg(2+), Co(2+), Mn(2+) and Ba(2+). Inhibited by Fe(2+), Cu(2+), Zn(2+), NaF, molybdate, arsenate, vanadate and inorganic phosphate. No effect of tartrate, Asp, Gln, glutathione, Asn, ascorbic acid and phosphite. Functionally, metallo-phosphoesterase involved in phosphate metabolism. Acid phosphatase activity with phosphoenolpyruvate, inorganic pyrophosphate, phenyl-phosphate and p-nitrophenyl-phosphate as the most effective substrates. No activity with phytic acid, phosphocholine or bis-p-nitrophenyl-phosphate. Has a peroxidase activity at alkaline pH. The sequence is that of Bifunctional purple acid phosphatase 26 (PAP26) from Arabidopsis thaliana (Mouse-ear cress).